The chain runs to 61 residues: Putative antitoxin VapB21 (61 aa).

Belongs to the UPF0165 family.

Functionally, possibly the antitoxin component of a type II toxin-antitoxin (TA) system. Its cognate toxin is VapC21 (Potential). The sequence is that of Putative antitoxin VapB21 (vapB21) from Archaeoglobus fulgidus (strain ATCC 49558 / DSM 4304 / JCM 9628 / NBRC 100126 / VC-16).